A 104-amino-acid polypeptide reads, in one-letter code: Guanidinium exporter (104 aa).

Topologically, residues methionine 1–tryptophan 3 are cytoplasmic. The chain crosses the membrane as a helical span at residues isoleucine 4–phenylalanine 26. At threonine 27–serine 32 the chain is on the periplasmic side. The helical transmembrane segment at isoleucine 33–methionine 50 threads the bilayer. Residues lysine 51–proline 54 are Cytoplasmic-facing. Residues alanine 55–valine 77 traverse the membrane as a helical segment. Over phenylalanine 78–asparagine 83 the chain is Periplasmic. Residues isoleucine 84–alanine 103 traverse the membrane as a helical segment. A topological domain (cytoplasmic) is located at residue serine 104.

It belongs to the drug/metabolite transporter (DMT) superfamily. Small multidrug resistance (SMR) (TC 2.A.7.1) family. Gdx/SugE subfamily.

Its subcellular location is the cell inner membrane. In terms of biological role, guanidinium ion exporter. Couples guanidinium export to the proton motive force, exchanging one guanidinium ion for two protons. The polypeptide is Guanidinium exporter (Proteus vulgaris).